The sequence spans 31 residues: Cyclotide mden-M (31 aa).

The segment at residues 1-31 (GTIPCGESCVYIPCITSALGCSCKKKVCYKN) is a cross-link (cyclopeptide (Gly-Asn)). Cystine bridges form between Cys-5-Cys-21, Cys-9-Cys-23, and Cys-14-Cys-28.

It belongs to the cyclotide family. Bracelet subfamily. Post-translationally, this is a cyclic peptide.

In terms of biological role, probably participates in a plant defense mechanism. This Melicytus dentatus (Tree violet) protein is Cyclotide mden-M.